Reading from the N-terminus, the 262-residue chain is Indole-3-glycerol phosphate synthase (262 aa).

This sequence belongs to the TrpC family.

It catalyses the reaction 1-(2-carboxyphenylamino)-1-deoxy-D-ribulose 5-phosphate + H(+) = (1S,2R)-1-C-(indol-3-yl)glycerol 3-phosphate + CO2 + H2O. Its pathway is amino-acid biosynthesis; L-tryptophan biosynthesis; L-tryptophan from chorismate: step 4/5. This Chlorobium luteolum (strain DSM 273 / BCRC 81028 / 2530) (Pelodictyon luteolum) protein is Indole-3-glycerol phosphate synthase.